A 269-amino-acid chain; its full sequence is Mediator of RNA polymerase II transcription subunit 8 (269 aa).

The disordered stretch occupies residues 187–217; the sequence is RVLEDDDEEDESDSEEGEGEADEMEVVGARR. Residues 190–211 are compositionally biased toward acidic residues; that stretch reads EDDDEEDESDSEEGEGEADEME.

This sequence belongs to the Mediator complex subunit 8 family. Component of the Mediator complex.

Its subcellular location is the nucleus. Functionally, component of the Mediator complex, a coactivator involved in the regulated transcription of nearly all RNA polymerase II-dependent genes. Mediator functions as a bridge to convey information from gene-specific regulatory proteins to the basal RNA polymerase II transcription machinery. Mediator is recruited to promoters by direct interactions with regulatory proteins and serves as a scaffold for the assembly of a functional preinitiation complex with RNA polymerase II and the general transcription factors. In Aspergillus niger (strain ATCC MYA-4892 / CBS 513.88 / FGSC A1513), this protein is Mediator of RNA polymerase II transcription subunit 8 (med8).